The sequence spans 122 residues: UPF0102 protein CKL_1410 (122 aa).

Belongs to the UPF0102 family.

The protein is UPF0102 protein CKL_1410 of Clostridium kluyveri (strain ATCC 8527 / DSM 555 / NBRC 12016 / NCIMB 10680 / K1).